A 497-amino-acid polypeptide reads, in one-letter code: Tryptophan decarboxylase 2 (497 aa).

Residues Ala162, Ser163, Thr257, and Asn311 each coordinate pyridoxal 5'-phosphate. Lys314 bears the N6-(pyridoxal phosphate)lysine mark.

Belongs to the group II decarboxylase family. Requires pyridoxal 5'-phosphate as cofactor.

The catalysed reaction is L-tryptophan + H(+) = tryptamine + CO2. Its function is as follows. Involved in serotonin biosynthesis. Catalyzes the decarboxylation of L-tryptophan to tryptamine, which is converted to serotonin by tryptamine 5-hydroxylase. May play a minor role in serotonin biosynthetis during senescence. Accumulation of serotonin attenuates leaf senescence. This chain is Tryptophan decarboxylase 2, found in Oryza sativa subsp. japonica (Rice).